The sequence spans 265 residues: Hemin import ATP-binding protein HmuV (265 aa).

In terms of domain architecture, ABC transporter spans 13 to 249 (LKASNLHLQL…TAVENVYGWP (237 aa)). 45 to 52 (GPNGAGKS) serves as a coordination point for ATP.

Belongs to the ABC transporter superfamily. Heme (hemin) importer (TC 3.A.1.14.5) family. As to quaternary structure, the complex is composed of two ATP-binding proteins (HmuV), two transmembrane proteins (HmuU) and a solute-binding protein (HmuT).

The protein localises to the cell inner membrane. Functionally, part of the ABC transporter complex HmuTUV involved in hemin import. Responsible for energy coupling to the transport system. The protein is Hemin import ATP-binding protein HmuV of Photobacterium damselae subsp. damselae (Listonella damsela).